A 399-amino-acid chain; its full sequence is Galactokinase (399 aa).

E42–D45 serves as a coordination point for substrate. ATP-binding positions include S76 and A133–S139. S139 and E171 together coordinate Mg(2+). The active-site Proton acceptor is D183. Y233 is a substrate binding site.

This sequence belongs to the GHMP kinase family. GalK subfamily.

It localises to the cytoplasm. The enzyme catalyses alpha-D-galactose + ATP = alpha-D-galactose 1-phosphate + ADP + H(+). It functions in the pathway carbohydrate metabolism; galactose metabolism. Its function is as follows. Catalyzes the transfer of the gamma-phosphate of ATP to D-galactose to form alpha-D-galactose-1-phosphate (Gal-1-P). The protein is Galactokinase of Lactococcus lactis subsp. cremoris (strain MG1363).